The chain runs to 112 residues: Cytochrome c type-1 (112 aa).

C20, C23, H24, and M85 together coordinate heme c.

Post-translationally, binds 1 heme c group covalently per subunit.

The protein resides in the mitochondrion intermembrane space. Electron carrier between complex III (ubiquinol-cytochrome c oxireductase) and complex IV (cytochrome c oxidase). The chain is Cytochrome c type-1 from Ascaris suum (Pig roundworm).